We begin with the raw amino-acid sequence, 303 residues long: Sulfate adenylyltransferase subunit 2 (303 aa).

It belongs to the PAPS reductase family. CysD subfamily. In terms of assembly, heterodimer composed of CysD, the smaller subunit, and CysN.

The enzyme catalyses sulfate + ATP + H(+) = adenosine 5'-phosphosulfate + diphosphate. It functions in the pathway sulfur metabolism; hydrogen sulfide biosynthesis; sulfite from sulfate: step 1/3. With CysN forms the ATP sulfurylase (ATPS) that catalyzes the adenylation of sulfate producing adenosine 5'-phosphosulfate (APS) and diphosphate, the first enzymatic step in sulfur assimilation pathway. APS synthesis involves the formation of a high-energy phosphoric-sulfuric acid anhydride bond driven by GTP hydrolysis by CysN coupled to ATP hydrolysis by CysD. This is Sulfate adenylyltransferase subunit 2 from Sulfurovum sp. (strain NBC37-1).